A 231-amino-acid chain; its full sequence is Protein HHL1, chloroplastic (231 aa).

Residues 1-39 constitute a chloroplast transit peptide; the sequence is MEVSMSLNALTRLPLKNTGRFEEVGLARHSLFSSRTACR. Residues 93–113 traverse the membrane as a helical segment; it reads YLWYPLSIIAGGTTAKIMVAA. The tract at residues 206–231 is disordered; it reads SFGKLSSLNPGSDEKTEETSDEKAKA. The span at 217 to 231 shows a compositional bias: basic and acidic residues; the sequence is SDEKTEETSDEKAKA.

As to quaternary structure, interacts with psbB, psbC and LQY1, but not with psbA or psbD.

It localises to the plastid. The protein resides in the chloroplast thylakoid membrane. Its function is as follows. Involved in photoprotection. Forms a complex with LQY1 that is involved in the repair and reassembly cycle of the PSII-LHCII supercomplex under high-light conditions. May function in guiding the release of psbC from PSII core monomers. The sequence is that of Protein HHL1, chloroplastic from Arabidopsis thaliana (Mouse-ear cress).